Consider the following 530-residue polypeptide: Arginine--tRNA ligase (530 aa).

The 'HIGH' region motif lies at 113–123 (ANPTGPLHIGH).

Belongs to the class-I aminoacyl-tRNA synthetase family. In terms of assembly, monomer.

It localises to the cytoplasm. It catalyses the reaction tRNA(Arg) + L-arginine + ATP = L-arginyl-tRNA(Arg) + AMP + diphosphate. This Campylobacter jejuni (strain RM1221) protein is Arginine--tRNA ligase.